We begin with the raw amino-acid sequence, 666 residues long: Frizzled-3 (666 aa).

A signal peptide spans 1-22 (MAMTWIVFSLWPLTVFMGHIGG). An FZ domain is found at 23–136 (HSLFSCEPIT…CSRFPDCDEP (114 aa)). The Extracellular portion of the chain corresponds to 23–205 (HSLFSCEPIT…REELSFARYF (183 aa)). 5 disulfide bridges follow: Cys-28-Cys-89, Cys-36-Cys-82, Cys-73-Cys-110, Cys-99-Cys-133, and Cys-103-Cys-127. N-linked (GlcNAc...) asparagine glycosylation is present at Asn-42. Residues 206–226 (IGLISIICLSATLFTFLTFLI) form a helical membrane-spanning segment. Residues 227–237 (DVTRFRYPERP) lie on the Cytoplasmic side of the membrane. The chain crosses the membrane as a helical span at residues 238–258 (IIFYAVCYMMVSLIFFIGFLL). The Extracellular segment spans residues 259–288 (EDRVACNASIPAQYKASTVTQGSHNKACTM). A glycan (N-linked (GlcNAc...) asparagine) is linked at Asn-265. Residues 289–309 (LFMILYFFTMAGSVWWVILTI) form a helical membrane-spanning segment. The Cytoplasmic segment spans residues 310–328 (TWFLAAVPKWGSEAIEKKA). The chain crosses the membrane as a helical span at residues 329–349 (LLFHASAWGIPGTLTIILLAM). Topologically, residues 350–374 (NKIEGDNISGVCFVGLYDVDALRYF) are extracellular. The N-linked (GlcNAc...) asparagine glycan is linked to Asn-356. The chain crosses the membrane as a helical span at residues 375–395 (VLAPLCLYVVVGVSLLLAGII). Residues 396–420 (SLNRVRIEIPLEKENQDKLVKFMIR) lie on the Cytoplasmic side of the membrane. A helical transmembrane segment spans residues 421–441 (IGVFSILYLVPLLVVIGCYFY). Residues 442–477 (EQAYRGIWETTWIQERCREYHIPCPYQVTQMSRPDL) are Extracellular-facing. Residues 478-498 (ILFLMKYLMALIVGIPSVFWV) traverse the membrane as a helical segment. The Cytoplasmic segment spans residues 499-666 (GSKKTCFEWA…RVIEEDGTSA (168 aa)). The short motif at 502–507 (KTCFEW) is the Lys-Thr-X-X-X-Trp motif, mediates interaction with the PDZ domain of Dvl family members element. The interval 538-666 (RDPNTPIIRK…RVIEEDGTSA (129 aa)) is disordered. Polar residues predominate over residues 550-565 (GTSTQGTSTHASSTQL). Residues 617-638 (LTDHSRHSSSHRLNEQSRHSSI) are compositionally biased toward basic and acidic residues. Positions 639–656 (RDLSNNPMTHITHGTSMN) are enriched in polar residues.

Belongs to the G-protein coupled receptor Fz/Smo family. Interacts with VANGL2. Ubiquitinated by ZNRF3, leading to its degradation by the proteasome. In terms of tissue distribution, widely expressed. Relatively high expression in the CNS, including regions of the limbic system, in kidney, pancreas, skeletal muscle, uterus and testis.

It localises to the membrane. Its subcellular location is the cell membrane. The protein localises to the cell surface. The protein resides in the apical cell membrane. Its function is as follows. Receptor for Wnt proteins. Most of frizzled receptors are coupled to the beta-catenin canonical signaling pathway, which leads to the activation of disheveled proteins, inhibition of GSK-3 kinase, nuclear accumulation of beta-catenin and activation of Wnt target genes. A second signaling pathway involving PKC and calcium fluxes has been seen for some family members, but it is not yet clear if it represents a distinct pathway or if it can be integrated in the canonical pathway, as PKC seems to be required for Wnt-mediated inactivation of GSK-3 kinase. Both pathways seem to involve interactions with G-proteins. Activation by Wnt5A stimulates PKC activity via a G-protein-dependent mechanism. Involved in transduction and intercellular transmission of polarity information during tissue morphogenesis and/or in differentiated tissues. Plays a role in controlling early axon growth and guidance processes necessary for the formation of a subset of central and peripheral major fiber tracts. Required for the development of major fiber tracts in the central nervous system, including: the anterior commissure, the corpus callosum, the thalamocortical, corticothalamic and nigrostriatal tracts, the corticospinal tract, the fasciculus retroflexus, the mammillothalamic tract, the medial lemniscus, and ascending fiber tracts from the spinal cord to the brain. In the peripheral nervous system, controls axon growth in distinct populations of cranial and spinal motor neurons, including the facial branchimotor nerve, the hypoglossal nerve, the phrenic nerve, and motor nerves innervating dorsal limbs. Involved in the migration of cranial neural crest cells. May also be implicated in the transmission of sensory information from the trunk and limbs to the brain. Controls commissural sensory axons guidance after midline crossing along the anterior-posterior axis in the developing spinal cord in a Wnt-dependent signaling pathway. Together with FZD6, is involved in the neural tube closure and plays a role in the regulation of the establishment of planar cell polarity (PCP), particularly in the orientation of asymmetric bundles of stereocilia on the apical faces of a subset of auditory and vestibular sensory cells located in the inner ear. Promotes neurogenesis by maintaining sympathetic neuroblasts within the cell cycle in a beta-catenin-dependent manner. This is Frizzled-3 (FZD3) from Homo sapiens (Human).